A 264-amino-acid polypeptide reads, in one-letter code: 3-methyl-2-oxobutanoate hydroxymethyltransferase (264 aa).

Mg(2+) contacts are provided by D45 and D84. 3-methyl-2-oxobutanoate-binding positions include 45-46, D84, and K112; that span reads DS. E114 serves as a coordination point for Mg(2+). Residue E181 is the Proton acceptor of the active site.

It belongs to the PanB family. As to quaternary structure, homodecamer; pentamer of dimers. The cofactor is Mg(2+).

The protein localises to the cytoplasm. The enzyme catalyses 3-methyl-2-oxobutanoate + (6R)-5,10-methylene-5,6,7,8-tetrahydrofolate + H2O = 2-dehydropantoate + (6S)-5,6,7,8-tetrahydrofolate. The protein operates within cofactor biosynthesis; (R)-pantothenate biosynthesis; (R)-pantoate from 3-methyl-2-oxobutanoate: step 1/2. Catalyzes the reversible reaction in which hydroxymethyl group from 5,10-methylenetetrahydrofolate is transferred onto alpha-ketoisovalerate to form ketopantoate. The polypeptide is 3-methyl-2-oxobutanoate hydroxymethyltransferase (Erwinia tasmaniensis (strain DSM 17950 / CFBP 7177 / CIP 109463 / NCPPB 4357 / Et1/99)).